Here is a 962-residue protein sequence, read N- to C-terminus: Protein suppressor of underreplication (962 aa).

Disordered stretches follow at residues 353–413 (EIVT…TRAA), 438–590 (TPTP…LSGS), 658–712 (NSSH…SPDL), 866–900 (QERTQPSNGNRNSIVASLRKSPKSPKHGARTTQAT), and 916–962 (QTSS…ELFK). Positions 372–382 (PRTKSKKKCSK) are enriched in basic residues. Over residues 386–395 (PCKEADLTDS) the composition is skewed to basic and acidic residues. Composition is skewed to polar residues over residues 438–448 (TPTPSGATTAI) and 480–489 (LTRSAESKIN). Residues 524–552 (VKQESKAKAKPEQKKKIKTVDKPAQETPK) are compositionally biased toward basic and acidic residues. The span at 553-562 (RKPGRPRKCK) shows a compositional bias: basic residues. The segment covering 564-576 (LTETLGKSKTKPN) has biased composition (polar residues). Over residues 673–683 (RRTKALKRKRK) the composition is skewed to basic residues. Polar residues-rich tracts occupy residues 703–712 (RSATNKSPDL) and 866–880 (QERTQPSNGNRNSIV). Residues 885–894 (KSPKSPKHGA) are compositionally biased toward basic residues. Positions 916–944 (QTSSVESVSAPSTPVNPSTSAAACQTRTA) are enriched in polar residues. Basic residues predominate over residues 953-962 (TKRKRLELFK).

It is found in the nucleus. The protein resides in the chromosome. Required for underreplication of DNA, which is found in many late replicating euchromatic regions of salivary gland polytene chromosomes. Controls chromatin organization in polytene chromosomes. The protein is Protein suppressor of underreplication (SuUR) of Drosophila erecta (Fruit fly).